The following is a 541-amino-acid chain: Protein yellow (541 aa).

The N-terminal stretch at 1–21 (MFQDKGWILVTLITLVTPSWA) is a signal peptide. N-linked (GlcNAc...) asparagine glycosylation is found at Asn144 and Asn215. Residues 443–463 (QKPQTSWASSPPPPSRTYLPA) are disordered.

This sequence belongs to the major royal jelly protein family.

It localises to the secreted. Its function is as follows. Controls the pigmentation pattern of the adult cuticle and larval mouth parts. This Drosophila melanogaster (Fruit fly) protein is Protein yellow (y).